The following is an 800-amino-acid chain: Aldehyde dehydrogenase family 16 member A1 (800 aa).

It belongs to the aldehyde dehydrogenase family. Interacts with SPG21.

In Bos taurus (Bovine), this protein is Aldehyde dehydrogenase family 16 member A1 (ALDH16A1).